A 126-amino-acid chain; its full sequence is MSVMDLAGTCSSFQSDLDFCSDCGSVLPLPGAQDTVTCTRCGFNINVRDFEGKVVKTSVVFHQLGTAMPMSVEEGPECQGPVVDRRCPRCGHEGMAYHTRQMRSADEGQTVFYTCTNCKFQEKEDS.

C20, C23, C38, C41, C87, and C90 together coordinate Zn(2+). A C4-type zinc finger spans residues 20 to 41 (CSDCGSVLPLPGAQDTVTCTRC). A TFIIS-type zinc finger spans residues 83–123 (VDRRCPRCGHEGMAYHTRQMRSADEGQTVFYTCTNCKFQEK). A Hairpin motif is present at residues 106-107 (DE). C115 and C118 together coordinate Zn(2+).

It belongs to the archaeal RpoM/eukaryotic RPA12/RPB9/RPC11 RNA polymerase family. In terms of assembly, component of the RNA polymerase I (Pol I) complex consisting of 13 subunits: a ten-subunit catalytic core composed of POLR1A/RPA1, POLR1B/RPA2, POLR1C/RPAC1, POLR1D/RPAC2, POLR1H/RPA12, POLR2E/RPABC1, POLR2F/RPABC2, POLR2H/RPABC3, POLR2K/RPABC4 and POLR2L/RPABC5; a mobile stalk subunit POLR1F/RPA43 protruding from the core and additional subunits homologous to general transcription factors POLR1E/RPA49 and POLR1G/RPA34. Part of Pol I pre-initiation complex (PIC), in which Pol I core assembles with RRN3 and promoter-bound UTBF and SL1/TIF-IB complex.

The protein resides in the nucleus. It localises to the nucleolus. Functionally, core component of RNA polymerase I (Pol I), a DNA-dependent RNA polymerase which synthesizes ribosomal RNA precursors using the four ribonucleoside triphosphates as substrates. Can mediate Pol I proofreading of the nascent RNA transcript. Anchors into the Pol I active site to monitor transcription fidelity and cleave mis-incorporated 5'-ribonucleotides. This chain is DNA-directed RNA polymerase I subunit RPA12, found in Macaca mulatta (Rhesus macaque).